The following is a 264-amino-acid chain: Small ribosomal subunit protein uS2 (264 aa).

The disordered stretch occupies residues 228 to 264 (VDTSATVDEEEAEVAEETESMESAEDLDADLIEEEAE). The segment covering 234–264 (VDEEEAEVAEETESMESAEDLDADLIEEEAE) has biased composition (acidic residues).

Belongs to the universal ribosomal protein uS2 family.

The polypeptide is Small ribosomal subunit protein uS2 (Symbiobacterium thermophilum (strain DSM 24528 / JCM 14929 / IAM 14863 / T)).